A 92-amino-acid chain; its full sequence is Small ribosomal subunit protein uS19 (92 aa).

Belongs to the universal ribosomal protein uS19 family.

Its function is as follows. Protein S19 forms a complex with S13 that binds strongly to the 16S ribosomal RNA. This is Small ribosomal subunit protein uS19 from Buchnera aphidicola subsp. Acyrthosiphon pisum (strain 5A).